Consider the following 410-residue polypeptide: LL-diaminopimelate aminotransferase (410 aa).

Tyr15 and Gly42 together coordinate substrate. Pyridoxal 5'-phosphate is bound by residues Tyr72, Ala108–Lys109, Tyr132, Asn188, Tyr219, and Ser247–Ser249. Lys109, Tyr132, and Asn188 together coordinate substrate. At Lys250 the chain carries N6-(pyridoxal phosphate)lysine. Positions 258 and 293 each coordinate pyridoxal 5'-phosphate. The substrate site is built by Asn293 and Arg389.

Belongs to the class-I pyridoxal-phosphate-dependent aminotransferase family. LL-diaminopimelate aminotransferase subfamily. As to quaternary structure, homodimer. Requires pyridoxal 5'-phosphate as cofactor.

It carries out the reaction (2S,6S)-2,6-diaminopimelate + 2-oxoglutarate = (S)-2,3,4,5-tetrahydrodipicolinate + L-glutamate + H2O + H(+). The protein operates within amino-acid biosynthesis; L-lysine biosynthesis via DAP pathway; LL-2,6-diaminopimelate from (S)-tetrahydrodipicolinate (aminotransferase route): step 1/1. Its function is as follows. Involved in the synthesis of meso-diaminopimelate (m-DAP or DL-DAP), required for both lysine and peptidoglycan biosynthesis. Catalyzes the direct conversion of tetrahydrodipicolinate to LL-diaminopimelate. The protein is LL-diaminopimelate aminotransferase of Bacteroides fragilis (strain YCH46).